Here is a 285-residue protein sequence, read N- to C-terminus: tRNA pseudouridine synthase A (285 aa).

The active-site Nucleophile is the aspartate 64. Residue tyrosine 125 coordinates substrate.

It belongs to the tRNA pseudouridine synthase TruA family. Homodimer.

It catalyses the reaction uridine(38/39/40) in tRNA = pseudouridine(38/39/40) in tRNA. Formation of pseudouridine at positions 38, 39 and 40 in the anticodon stem and loop of transfer RNAs. The protein is tRNA pseudouridine synthase A of Streptomyces avermitilis (strain ATCC 31267 / DSM 46492 / JCM 5070 / NBRC 14893 / NCIMB 12804 / NRRL 8165 / MA-4680).